The sequence spans 364 residues: Probable endopolygalacturonase B (364 aa).

An N-terminal signal peptide occupies residues 1-20 (MHFFQSSLVAATMGAALVAA). A propeptide spanning residues 21–29 (APAADLETR) is cleaved from the precursor. A disulfide bridge links Cys32 with Cys47. N-linked (GlcNAc...) asparagine glycans are attached at residues Asn138 and Asn141. 6 PbH1 repeats span residues 159–188 (SDHL…DVGS), 189–210 (STYI…AVNS), 211–231 (GEHI…SIGS), 240–261 (VNDV…RIKT), 269–291 (VTGV…VVQQ), and 303–324 (TNGV…TSSA). Asp203 (proton donor) is an active-site residue. Cys205 and Cys221 form a disulfide bridge. The active site involves His225. A disulfide bridge connects residues Cys331 and Cys336. N-linked (GlcNAc...) asparagine glycosylation is present at Asn338. A disulfide bridge connects residues Cys355 and Cys364.

This sequence belongs to the glycosyl hydrolase 28 family.

The protein localises to the secreted. The catalysed reaction is (1,4-alpha-D-galacturonosyl)n+m + H2O = (1,4-alpha-D-galacturonosyl)n + (1,4-alpha-D-galacturonosyl)m.. Functionally, involved in maceration and soft-rotting of plant tissue. Hydrolyzes the 1,4-alpha glycosidic bonds of de-esterified pectate in the smooth region of the plant cell wall. This is Probable endopolygalacturonase B (pgaB) from Aspergillus fumigatus (strain CBS 144.89 / FGSC A1163 / CEA10) (Neosartorya fumigata).